The sequence spans 483 residues: Glutamyl-tRNA(Gln) amidotransferase subunit A (483 aa).

Residues Lys76 and Ser151 each act as charge relay system in the active site. Residue Ser175 is the Acyl-ester intermediate of the active site.

The protein belongs to the amidase family. GatA subfamily. As to quaternary structure, heterotrimer of A, B and C subunits.

It catalyses the reaction L-glutamyl-tRNA(Gln) + L-glutamine + ATP + H2O = L-glutaminyl-tRNA(Gln) + L-glutamate + ADP + phosphate + H(+). Allows the formation of correctly charged Gln-tRNA(Gln) through the transamidation of misacylated Glu-tRNA(Gln) in organisms which lack glutaminyl-tRNA synthetase. The reaction takes place in the presence of glutamine and ATP through an activated gamma-phospho-Glu-tRNA(Gln). The polypeptide is Glutamyl-tRNA(Gln) amidotransferase subunit A (Chromobacterium violaceum (strain ATCC 12472 / DSM 30191 / JCM 1249 / CCUG 213 / NBRC 12614 / NCIMB 9131 / NCTC 9757 / MK)).